The following is a 202-amino-acid chain: MIGIAIPIKRLQFAKSRLAGVLAPAARQRLVLRLAQHVINAARQATGSFTMPARIWLVSADPAIAALAQASGVEWLPDRCEELNAALTEARKQIQNAGAQTMIVLAGDLPLVTAEDVAALYDALSEADLVLAPDQQQRGTNALALRLPSPLPFLFGLDSANRHVAAATQLGLRARLLTTPTLAFDLDDSERLRQYCAAERPA.

Phosphoenolpyruvate is bound by residues T140, G156, and S159.

This sequence belongs to the CofC family.

The catalysed reaction is phosphoenolpyruvate + GTP + H(+) = enolpyruvoyl-2-diphospho-5'-guanosine + diphosphate. It participates in cofactor biosynthesis; coenzyme F420 biosynthesis. In terms of biological role, guanylyltransferase that catalyzes the activation of phosphoenolpyruvate (PEP) as enolpyruvoyl-2-diphospho-5'-guanosine, via the condensation of PEP with GTP. It is involved in the biosynthesis of coenzyme F420, a hydride carrier cofactor. This Chloroflexus aggregans (strain MD-66 / DSM 9485) protein is Phosphoenolpyruvate guanylyltransferase.